A 201-amino-acid chain; its full sequence is Small ribosomal subunit protein uS4c (201 aa).

Residues 20-44 form a disordered region; that stretch reads GLTSKRPRAGSDLRNQSRSGKKSQY. The S4 RNA-binding domain occupies 89–152; it reads MRLDNTLFRL…NSRTLVQNLL (64 aa).

It belongs to the universal ribosomal protein uS4 family. In terms of assembly, part of the 30S ribosomal subunit. Contacts protein S5. The interaction surface between S4 and S5 is involved in control of translational fidelity.

Its subcellular location is the plastid. The protein resides in the chloroplast. One of the primary rRNA binding proteins, it binds directly to 16S rRNA where it nucleates assembly of the body of the 30S subunit. Its function is as follows. With S5 and S12 plays an important role in translational accuracy. The polypeptide is Small ribosomal subunit protein uS4c (rps4) (Aethionema grandiflorum (Persian stone-cress)).